A 272-amino-acid polypeptide reads, in one-letter code: Shikimate dehydrogenase (NADP(+)) (272 aa).

Residues 14-16 and Thr61 contribute to the shikimate site; that span reads SKS. Catalysis depends on Lys65, which acts as the Proton acceptor. Glu77 contacts NADP(+). Positions 86 and 102 each coordinate shikimate. Residues 126–130, 149–154, and Met213 each bind NADP(+); these read GAGGA and NRTVSR. Tyr215 serves as a coordination point for shikimate. Gly237 is an NADP(+) binding site.

It belongs to the shikimate dehydrogenase family. As to quaternary structure, homodimer.

The enzyme catalyses shikimate + NADP(+) = 3-dehydroshikimate + NADPH + H(+). Its pathway is metabolic intermediate biosynthesis; chorismate biosynthesis; chorismate from D-erythrose 4-phosphate and phosphoenolpyruvate: step 4/7. Involved in the biosynthesis of the chorismate, which leads to the biosynthesis of aromatic amino acids. Catalyzes the reversible NADPH linked reduction of 3-dehydroshikimate (DHSA) to yield shikimate (SA). The protein is Shikimate dehydrogenase (NADP(+)) of Escherichia coli O81 (strain ED1a).